A 67-amino-acid chain; its full sequence is UPF0181 protein KPK_1966 (67 aa).

The disordered stretch occupies residues 48-67 (EQIVARFEDEDEDQDEDEDD). Residues 55 to 67 (EDEDEDQDEDEDD) show a composition bias toward acidic residues.

Belongs to the UPF0181 family.

The chain is UPF0181 protein KPK_1966 from Klebsiella pneumoniae (strain 342).